The following is a 171-amino-acid chain: Co-chaperone protein HscB (171 aa).

Positions 2 to 74 constitute a J domain; sequence DYFTLFGLPA…LARAEYLLSL (73 aa).

Belongs to the HscB family. In terms of assembly, interacts with HscA and stimulates its ATPase activity. Interacts with IscU.

Functionally, co-chaperone involved in the maturation of iron-sulfur cluster-containing proteins. Seems to help targeting proteins to be folded toward HscA. In Enterobacter sp. (strain 638), this protein is Co-chaperone protein HscB.